A 212-amino-acid chain; its full sequence is Large ribosomal subunit protein uL3 (212 aa).

The segment at 147-166 (GSTGQNQSPGKVFKGKKMPG) is disordered. Residue Q153 is modified to N5-methylglutamine.

It belongs to the universal ribosomal protein uL3 family. Part of the 50S ribosomal subunit. Forms a cluster with proteins L14 and L19. Post-translationally, methylated by PrmB.

Functionally, one of the primary rRNA binding proteins, it binds directly near the 3'-end of the 23S rRNA, where it nucleates assembly of the 50S subunit. The sequence is that of Large ribosomal subunit protein uL3 from Psychrobacter sp. (strain PRwf-1).